Consider the following 761-residue polypeptide: Cytoplasmic export protein 1 (761 aa).

HEAT repeat units follow at residues 385–423 and 498–534; these read IYPH…LNNE and NTIA…LEKL. Disordered regions lie at residues 660-692 and 714-761; these read DDGW…IAPS and STVT…DTNW. Polar residues-rich tracts occupy residues 680-692 and 714-737; these read PQNS…IAPS and STVT…SIRG. A compositionally biased stretch (acidic residues) spans 747 to 761; it reads GWDDDGDSDSWDTNW. Position 754 is a phosphoserine (serine 754).

As to quaternary structure, associates with the nuclear pore complex (NPC). Interacts with GSP1, LOS1, MSN5, NUP116 and TEF2.

The protein resides in the cytoplasm. In terms of biological role, component of the nuclear tRNA export machinery that my collect tRNA from the nuclear tRNA export receptors of the aminoacylation-dependent export and may deliver aminoacylated tRNAs to the translation machinery pathway at the nuclear pore complex. The protein is Cytoplasmic export protein 1 (CEX1) of Saccharomyces cerevisiae (strain ATCC 204508 / S288c) (Baker's yeast).